The chain runs to 353 residues: Jasmonate-induced oxygenase 4 (353 aa).

Positions 202 to 302 (VGASLRTNFY…RVSLAFFYNP (101 aa)) constitute a Fe2OG dioxygenase domain. R207 contributes to the jasmonate binding site. 2 residues coordinate 2-oxoglutarate: N209 and Y211. Residues H226, D228, and H283 each coordinate Fe cation. Residues R293 and S295 each contribute to the 2-oxoglutarate site. 2 residues coordinate jasmonate: R332 and R336.

This sequence belongs to the iron/ascorbate-dependent oxidoreductase family. It depends on L-ascorbate as a cofactor. Fe(2+) is required as a cofactor.

The catalysed reaction is jasmonate + 2-oxoglutarate + O2 = (1R,2R)-12-hydroxyjasmonate + succinate + CO2. In terms of biological role, 2-oxoglutarate-dependent dioxygenase involved in the oxidation of jasmonate (JA), a stress-induced phytohormone synthesized in response to attack by pathogens and herbivores, which triggers the activation of defense responses via the JA-mediated signaling pathway. Converts JA to 12-hydroxyjasmonate (12OH-JA), an inactive form of JA. Is specific to free JA, and cannot oxidize the bioactive form jasmonoyl-L-isoleucine (JA-Ile) or other JA-amino acid conjugates. Prevents over-accumulation of JA and indirectly its bioactive form JA-Ile under stress response. Acts as a negative regulator of JA-mediated defense signaling, by contributing to 12OH-JA accumulation, which represses JA defense responses upon infection by the fungal pathogen Botrytis cinerea. Acts as a negative regulator of JA-mediated defense responses upon infestation by the herbivorous caterpillar Mamestra brassicae. In Arabidopsis thaliana (Mouse-ear cress), this protein is Jasmonate-induced oxygenase 4.